Consider the following 349-residue polypeptide: 4-hydroxy-3-methylbut-2-en-1-yl diphosphate synthase (flavodoxin) (349 aa).

The [4Fe-4S] cluster site is built by Cys-264, Cys-267, Cys-299, and Glu-306.

This sequence belongs to the IspG family. [4Fe-4S] cluster is required as a cofactor.

It carries out the reaction (2E)-4-hydroxy-3-methylbut-2-enyl diphosphate + oxidized [flavodoxin] + H2O + 2 H(+) = 2-C-methyl-D-erythritol 2,4-cyclic diphosphate + reduced [flavodoxin]. It participates in isoprenoid biosynthesis; isopentenyl diphosphate biosynthesis via DXP pathway; isopentenyl diphosphate from 1-deoxy-D-xylulose 5-phosphate: step 5/6. Converts 2C-methyl-D-erythritol 2,4-cyclodiphosphate (ME-2,4cPP) into 1-hydroxy-2-methyl-2-(E)-butenyl 4-diphosphate. This Clostridium perfringens (strain 13 / Type A) protein is 4-hydroxy-3-methylbut-2-en-1-yl diphosphate synthase (flavodoxin).